Reading from the N-terminus, the 63-residue chain is Large ribosomal subunit protein uL30 (63 aa).

It belongs to the universal ribosomal protein uL30 family. Part of the 50S ribosomal subunit.

This Bradyrhizobium sp. (strain BTAi1 / ATCC BAA-1182) protein is Large ribosomal subunit protein uL30.